We begin with the raw amino-acid sequence, 183 residues long: Ferredoxin-2, mitochondrial (183 aa).

The N-terminal 52 residues, 1–52 (MAASMARGGVSARVLLQAARGTWWNRPGGTSGSGEGVALGTTRKFQATGSRP), are a transit peptide targeting the mitochondrion. A disordered region spans residues 45 to 65 (FQATGSRPAGEEDAGGPERPG). The 103-residue stretch at 68–170 (VNVVFVDRSG…GAEFTLPKIT (103 aa)) folds into the 2Fe-2S ferredoxin-type domain. Residues Cys105, Cys111, Cys114, and Cys151 each coordinate [2Fe-2S] cluster.

Belongs to the adrenodoxin/putidaredoxin family. In terms of assembly, component of the mitochondrial core iron-sulfur cluster (ISC) complex composed of NFS1, LYRM4, NDUFAB1, ISCU, FXN, and FDX2; this complex is a heterohexamer containing two copies of each monomer. Form a heterodimer complex with NFS1. Interacts (in both their reduced and oxidized states) with the cysteine desulfurase complex; this interaction stimulates cysteine desulfurase activity, and serves as a reductant for Fe-S cluster assembly. [2Fe-2S] cluster serves as cofactor. As to expression, widely expressed, with highest levels in testis, kidney and brain (at protein level). Expressed in muscle (at protein level). Expressed in fibroblasts (at protein level).

The protein resides in the mitochondrion. Its subcellular location is the mitochondrion matrix. In terms of biological role, electron donor, of the core iron-sulfur cluster (ISC) assembly complex, that acts to reduce the persulfide into sulfide during [2Fe-2S] clusters assembly on the scaffolding protein ISCU. The core iron-sulfur cluster (ISC) assembly complex is involved in the de novo synthesis of a [2Fe-2S] cluster, the first step of the mitochondrial iron-sulfur protein biogenesis. This process is initiated by the cysteine desulfurase complex (NFS1:LYRM4:NDUFAB1) that produces persulfide which is delivered on the scaffold protein ISCU in a FXN-dependent manner. Then this complex is stabilized by FDX2 which provides reducing equivalents to accomplish the [2Fe-2S] cluster assembly. Finally, the [2Fe-2S] cluster is transferred from ISCU to chaperone proteins, including HSCB, HSPA9 and GLRX5. Essential for coenzyme Q biosynthesis: together with FDXR, transfers the electrons required for the hydroxylation reaction performed by COQ6. This chain is Ferredoxin-2, mitochondrial, found in Homo sapiens (Human).